The primary structure comprises 72 residues: Disintegrin cotiarin (72 aa).

In terms of domain architecture, Disintegrin spans 1–72; the sequence is EAGEECDCGA…SADCPRNRFH (72 aa). 6 disulfide bridges follow: cysteine 6/cysteine 21, cysteine 8/cysteine 16, cysteine 15/cysteine 38, cysteine 29/cysteine 35, cysteine 34/cysteine 59, and cysteine 47/cysteine 66. Positions 51 to 53 match the Cell attachment site motif; the sequence is RGD. The interval 51-72 is disordered; it reads RGDNPDDRCTGQSADCPRNRFH.

It belongs to the venom metalloproteinase (M12B) family. P-II subfamily. P-IIa sub-subfamily. In terms of assembly, monomer. Expressed by the venom gland.

The protein resides in the secreted. In terms of biological role, inhibits fibrinogen interaction with platelets. Acts by binding to alpha-IIb/beta-3 (ITGA2B/ITGB3) on the platelet surface and inhibits aggregation induced by ADP, thrombin, platelet-activating factor and collagen. The sequence is that of Disintegrin cotiarin from Bothrops cotiara (Cotiara).